A 188-amino-acid chain; its full sequence is MEIKLFGKWDSETVTVKDPSLKSYVSVAPVLVPHTAGRNSKKSFDKSKMNIVERLANKLMANQENTGKKHETLAIVEEALTIIENRTKENPVQVLVDALENSGPREETTRISYGGIAFLQSVDVSPSRRLDTAFRNIALGASQSAHKNKKTVAQCLADEIIFASKADMQKSFAVRKKEEKERVAQSAR.

The protein belongs to the universal ribosomal protein uS7 family. Part of the 30S ribosomal subunit.

Its function is as follows. One of the primary rRNA binding proteins, it binds directly to 16S rRNA where it nucleates assembly of the head domain of the 30S subunit. Is located at the subunit interface close to the decoding center. This is Small ribosomal subunit protein uS7 from Methanococcus maripaludis (strain C7 / ATCC BAA-1331).